Reading from the N-terminus, the 311-residue chain is Malate dehydrogenase (311 aa).

NAD(+) contacts are provided by residues 7-13 (GAAGGIG) and aspartate 34. The substrate site is built by arginine 81 and arginine 87. Residues asparagine 94 and 117–119 (ITN) contribute to the NAD(+) site. Asparagine 119 and arginine 153 together coordinate substrate. Histidine 177 (proton acceptor) is an active-site residue. Residue methionine 227 coordinates NAD(+).

The protein belongs to the LDH/MDH superfamily. MDH type 1 family. Homodimer.

It catalyses the reaction (S)-malate + NAD(+) = oxaloacetate + NADH + H(+). In terms of biological role, catalyzes the reversible oxidation of malate to oxaloacetate. This Shewanella sp. (strain ANA-3) protein is Malate dehydrogenase.